The following is a 359-amino-acid chain: Nicotinate-nucleotide--dimethylbenzimidazole phosphoribosyltransferase (359 aa).

E318 serves as the catalytic Proton acceptor.

The protein belongs to the CobT family. As to quaternary structure, homodimer.

The catalysed reaction is 5,6-dimethylbenzimidazole + nicotinate beta-D-ribonucleotide = alpha-ribazole 5'-phosphate + nicotinate + H(+). The protein operates within nucleoside biosynthesis; alpha-ribazole biosynthesis; alpha-ribazole from 5,6-dimethylbenzimidazole: step 1/2. Catalyzes the synthesis of alpha-ribazole-5'-phosphate from nicotinate mononucleotide (NAMN) and 5,6-dimethylbenzimidazole (DMB). In Escherichia coli O81 (strain ED1a), this protein is Nicotinate-nucleotide--dimethylbenzimidazole phosphoribosyltransferase.